Here is a 654-residue protein sequence, read N- to C-terminus: DNA mismatch repair protein MutL (654 aa).

Residues 358-437 (KEHVRETMQQ…ADRRTDESLP (80 aa)) are disordered. Over residues 384-394 (TSIGNSWSPSH) the composition is skewed to polar residues. The span at 413–434 (RNERVETNTEEKYEQADRRTDE) shows a compositional bias: basic and acidic residues.

Belongs to the DNA mismatch repair MutL/HexB family.

Its function is as follows. This protein is involved in the repair of mismatches in DNA. It is required for dam-dependent methyl-directed DNA mismatch repair. May act as a 'molecular matchmaker', a protein that promotes the formation of a stable complex between two or more DNA-binding proteins in an ATP-dependent manner without itself being part of a final effector complex. The protein is DNA mismatch repair protein MutL of Shouchella clausii (strain KSM-K16) (Alkalihalobacillus clausii).